We begin with the raw amino-acid sequence, 352 residues long: 4-hydroxy-2-oxovalerate aldolase 5 (352 aa).

In terms of domain architecture, Pyruvate carboxyltransferase spans 9–261 (IRVTDSSLRD…RTGIDTLKII (253 aa)). 17–18 (RD) contacts substrate. Asp18 serves as a coordination point for Mn(2+). His21 functions as the Proton acceptor in the catalytic mechanism. 2 residues coordinate substrate: Ser171 and His200. 2 residues coordinate Mn(2+): His200 and His202. Residue Tyr291 participates in substrate binding.

This sequence belongs to the 4-hydroxy-2-oxovalerate aldolase family.

The enzyme catalyses (S)-4-hydroxy-2-oxopentanoate = acetaldehyde + pyruvate. The sequence is that of 4-hydroxy-2-oxovalerate aldolase 5 from Rhodococcus opacus (strain B4).